The primary structure comprises 566 residues: Malate synthase, glyoxysomal (566 aa).

Arg179 acts as the Proton acceptor in catalysis. Catalysis depends on Asp465, which acts as the Proton donor. A Microbody targeting signal motif is present at residues 564-566 (SRL).

It belongs to the malate synthase family.

It is found in the glyoxysome. It carries out the reaction glyoxylate + acetyl-CoA + H2O = (S)-malate + CoA + H(+). It functions in the pathway carbohydrate metabolism; glyoxylate cycle; (S)-malate from isocitrate: step 2/2. This Raphanus sativus (Radish) protein is Malate synthase, glyoxysomal (MLS).